A 109-amino-acid chain; its full sequence is Small ribosomal subunit protein bS6 (109 aa).

The protein belongs to the bacterial ribosomal protein bS6 family.

In terms of biological role, binds together with bS18 to 16S ribosomal RNA. This Ehrlichia chaffeensis (strain ATCC CRL-10679 / Arkansas) protein is Small ribosomal subunit protein bS6.